The sequence spans 402 residues: UDP-glucose 6-dehydrogenase (402 aa).

NAD(+) contacts are provided by residues 2 to 19, V11, D29, K34, T83, T118, and E145; that span reads KIAVAGSGYVGLSLGVLL. Substrate is bound by residues 141–145, K204, N208, 249–253, and G257; these read EFLRE and YNNPS. Y259 provides a ligand contact to NAD(+). C260 acts as the Nucleophile in catalysis. K263 is a binding site for NAD(+). K320 is a binding site for substrate. Residue R327 coordinates NAD(+).

It belongs to the UDP-glucose/GDP-mannose dehydrogenase family.

It catalyses the reaction UDP-alpha-D-glucose + 2 NAD(+) + H2O = UDP-alpha-D-glucuronate + 2 NADH + 3 H(+). It functions in the pathway nucleotide-sugar biosynthesis; UDP-alpha-D-glucuronate biosynthesis; UDP-alpha-D-glucuronate from UDP-alpha-D-glucose: step 1/1. Functionally, catalyzes the formation of UDP-glucuronic acid which is required for capsular hyaluronic acid synthesis. The chain is UDP-glucose 6-dehydrogenase (hasB) from Streptococcus pyogenes serotype M3 (strain ATCC BAA-595 / MGAS315).